The following is a 101-amino-acid chain: NAD(P)H-quinone oxidoreductase subunit 4L, chloroplastic (101 aa).

The next 3 helical transmembrane spans lie at 2-22 (MTEH…YGLI), 32-52 (MCLE…SDLF), and 61-81 (IFSI…PAIV).

Belongs to the complex I subunit 4L family. In terms of assembly, NDH is composed of at least 16 different subunits, 5 of which are encoded in the nucleus.

The protein resides in the plastid. Its subcellular location is the chloroplast thylakoid membrane. The enzyme catalyses a plastoquinone + NADH + (n+1) H(+)(in) = a plastoquinol + NAD(+) + n H(+)(out). The catalysed reaction is a plastoquinone + NADPH + (n+1) H(+)(in) = a plastoquinol + NADP(+) + n H(+)(out). Functionally, NDH shuttles electrons from NAD(P)H:plastoquinone, via FMN and iron-sulfur (Fe-S) centers, to quinones in the photosynthetic chain and possibly in a chloroplast respiratory chain. The immediate electron acceptor for the enzyme in this species is believed to be plastoquinone. Couples the redox reaction to proton translocation, and thus conserves the redox energy in a proton gradient. In Liriodendron tulipifera (Tuliptree), this protein is NAD(P)H-quinone oxidoreductase subunit 4L, chloroplastic.